The primary structure comprises 501 residues: Sugar phosphate exchanger 3 (501 aa).

The chain crosses the membrane as a helical span at residues 20–40 (CTHHHIVVFLLTFFSYSLLHA). Asparagine 62 is a glycosylation site (N-linked (GlcNAc...) asparagine). 5 helical membrane-spanning segments follow: residues 87-107 (TLFLGTLDTIFLFSYAVGLFV), 119-139 (WVLSFGMCSSALVVFFFGTLT), 153-173 (LWVVNGLLQSTGWPCVVAVMG), 183-203 (FVFGLWSACASVGNILGAFLA), and 214-234 (AFLVTASVQFAGGVIVFCGLL). Asparagine 273 is a glycosylation site (N-linked (GlcNAc...) asparagine). The next 6 helical transmembrane spans lie at 298–320 (GVVLYSLAYACLKLVNYSFFFWL), 340–360 (IWYDVGGIIGGTIQGLISDVL), 364–384 (APVLAISLLFAVGSLFGYSRS), 393–413 (VIMAITGFFIGGPSNMISSAI), 435–455 (GIVDGTGSIGAAVGQYLVSLI), and 459–479 (LGWMWVFYFFILMASSTILFI).

The protein belongs to the major facilitator superfamily. Organophosphate:Pi antiporter (OPA) (TC 2.A.1.4) family.

Its subcellular location is the endoplasmic reticulum membrane. It localises to the lysosome membrane. Unlike the other SLC37 members, seems to lack glucose-6-phosphate antiporter activity. This chain is Sugar phosphate exchanger 3 (SLC37A3), found in Gallus gallus (Chicken).